The primary structure comprises 466 residues: Clusterin-like protein 1 (466 aa).

Residues 1 to 20 (MKPPLLVFIVCLLWLKDSHC) form the signal peptide. Residues 57–111 (KQMKIMMERKEKEHTNLMSTLKKCREEKQEALKLLNEVQEHLEEEERLCRESLAD) are a coiled coil. 5 disulfides stabilise this stretch: C105/C333, C116/C325, C119/C322, C124/C315, and C131/C305. 6 N-linked (GlcNAc...) asparagine glycosylation sites follow: N196, N257, N311, N351, N412, and N431.

Belongs to the clusterin family.

It localises to the secreted. This Homo sapiens (Human) protein is Clusterin-like protein 1 (CLUL1).